Consider the following 238-residue polypeptide: tRNA (guanine-N(7)-)-methyltransferase (238 aa).

Positions 68, 93, 120, and 143 each coordinate S-adenosyl-L-methionine. Aspartate 143 is a catalytic residue. Substrate-binding positions include lysine 147, aspartate 179, and 216 to 219 (TKFE).

It belongs to the class I-like SAM-binding methyltransferase superfamily. TrmB family. In terms of assembly, monomer.

It catalyses the reaction guanosine(46) in tRNA + S-adenosyl-L-methionine = N(7)-methylguanosine(46) in tRNA + S-adenosyl-L-homocysteine. It functions in the pathway tRNA modification; N(7)-methylguanine-tRNA biosynthesis. Functionally, catalyzes the formation of N(7)-methylguanine at position 46 (m7G46) in tRNA. The sequence is that of tRNA (guanine-N(7)-)-methyltransferase from Edwardsiella ictaluri (strain 93-146).